The sequence spans 476 residues: Ribulose bisphosphate carboxylase large chain (476 aa).

The propeptide occupies M1–S2. P3 carries the post-translational modification N-acetylproline. K14 carries the N6,N6,N6-trimethyllysine modification. Substrate is bound by residues N123 and T173. The active-site Proton acceptor is K175. K177 is a binding site for substrate. Residues K201, D203, and E204 each coordinate Mg(2+). K201 carries the post-translational modification N6-carboxylysine. The active-site Proton acceptor is H294. 3 residues coordinate substrate: R295, H327, and S379.

The protein belongs to the RuBisCO large chain family. Type I subfamily. Heterohexadecamer of 8 large chains and 8 small chains; disulfide-linked. The disulfide link is formed within the large subunit homodimers. The cofactor is Mg(2+). Post-translationally, the disulfide bond which can form in the large chain dimeric partners within the hexadecamer appears to be associated with oxidative stress and protein turnover.

It is found in the plastid. Its subcellular location is the chloroplast. It catalyses the reaction 2 (2R)-3-phosphoglycerate + 2 H(+) = D-ribulose 1,5-bisphosphate + CO2 + H2O. The enzyme catalyses D-ribulose 1,5-bisphosphate + O2 = 2-phosphoglycolate + (2R)-3-phosphoglycerate + 2 H(+). In terms of biological role, ruBisCO catalyzes two reactions: the carboxylation of D-ribulose 1,5-bisphosphate, the primary event in carbon dioxide fixation, as well as the oxidative fragmentation of the pentose substrate in the photorespiration process. Both reactions occur simultaneously and in competition at the same active site. The sequence is that of Ribulose bisphosphate carboxylase large chain from Liriodendron tulipifera (Tuliptree).